A 97-amino-acid polypeptide reads, in one-letter code: Aspartyl/glutamyl-tRNA(Asn/Gln) amidotransferase subunit C (97 aa).

It belongs to the GatC family. Heterotrimer of A, B and C subunits.

The catalysed reaction is L-glutamyl-tRNA(Gln) + L-glutamine + ATP + H2O = L-glutaminyl-tRNA(Gln) + L-glutamate + ADP + phosphate + H(+). The enzyme catalyses L-aspartyl-tRNA(Asn) + L-glutamine + ATP + H2O = L-asparaginyl-tRNA(Asn) + L-glutamate + ADP + phosphate + 2 H(+). Its function is as follows. Allows the formation of correctly charged Asn-tRNA(Asn) or Gln-tRNA(Gln) through the transamidation of misacylated Asp-tRNA(Asn) or Glu-tRNA(Gln) in organisms which lack either or both of asparaginyl-tRNA or glutaminyl-tRNA synthetases. The reaction takes place in the presence of glutamine and ATP through an activated phospho-Asp-tRNA(Asn) or phospho-Glu-tRNA(Gln). The protein is Aspartyl/glutamyl-tRNA(Asn/Gln) amidotransferase subunit C of Synechococcus sp. (strain CC9902).